The primary structure comprises 843 residues: Toll-like receptor 4 (843 aa).

The first 23 residues, 1–23 (MMPPTRLAGTLIPAMAFLSCLRP), serve as a signal peptide directing secretion. One can recognise an LRRNT domain in the interval 24–54 (ESWDPCVQVVPNTTYQCMDLNLYKIPENIPT). Topologically, residues 24-633 (ESWDPCVQVV…FNNATCQISK (610 aa)) are extracellular. An intrachain disulfide couples cysteine 29 to cysteine 40. An N-linked (GlcNAc...) asparagine glycan is attached at asparagine 35. LRR repeat units follow at residues 55-76 (STKE…SFSN), 79-100 (ELQV…AYQG), 103-124 (HLST…AFSG), 127-148 (SLQT…PIGH), 151-172 (TLKE…EYFS), 176-197 (NLEH…DLRV), 205-225 (NLSL…AFKE), and 227-247 (KLHK…KSCI). N-linked (GlcNAc...) asparagine glycosylation is found at asparagine 189 and asparagine 205. N-linked (GlcNAc...) asparagine glycosylation is found at asparagine 282 and asparagine 295. 9 LRR repeats span residues 353 to 374 (SLKR…VKLP), 375 to 398 (SLEF…ADLK), 401 to 423 (RLKH…MGLE), 424 to 445 (QLEH…PVFL), 449 to 459 (NLRYLDISYTN), 473 to 496 (SLQV…FREM), 498 to 519 (NLTT…AFCL), 522 to 543 (RLRV…PYKP), and 546 to 569 (SLQI…QHFP). A disulfide bridge links cysteine 391 with cysteine 392. Asparagine 498 and asparagine 527 each carry an N-linked (GlcNAc...) asparagine glycan. Asparagine 576 carries an N-linked (GlcNAc...) asparagine glycan. The 52-residue stretch at 580–631 (NDFACVCEYQSFLQWVKDQRQLLVEVEHLVCAIPLQMRGMPVLGFNNATCQI) folds into the LRRCT domain. Disulfide bonds link cysteine 584/cysteine 610 and cysteine 586/cysteine 629. The N-linked (GlcNAc...) asparagine glycan is linked to asparagine 626. A helical transmembrane segment spans residues 634-654 (TIVGGSVFSILMVSVIAVLVY). At 655-843 (KFYFHLMLLA…SRQHDAETST (189 aa)) the chain is on the cytoplasmic side. Residues 674-817 (SIYDAFVIYS…IFWRRLRKAL (144 aa)) enclose the TIR domain. The disordered stretch occupies residues 824–843 (SPAGTADAAESRQHDAETST). A compositionally biased stretch (basic and acidic residues) spans 832–843 (AESRQHDAETST).

It belongs to the Toll-like receptor family. As to quaternary structure, belongs to the lipopolysaccharide (LPS) receptor, a multi-protein complex containing at least CD14, LY96 and TLR4. Binding to bacterial LPS leads to homodimerization. Interacts with LY96 via the extracellular domain. Interacts with MYD88 and TIRAP via their respective TIR domains. Interacts with NOX4. Interacts with CNPY3 and HSP90B1; this interaction is required for proper folding in the endoplasmic reticulum. Interacts with MAP3K21; this interaction leads to negative regulation of TLR4 signaling. Interacts with CD36, following CD36 stimulation by oxLDL or amyloid-beta 42, and forms a heterodimer with TLR6. The trimeric complex is internalized and triggers inflammatory response. LYN kinase activity facilitates TLR4-TLR6 heterodimerization and signal initiation. Interacts with TICAM1 in response to LPS in a WDFY1-dependent manner. Interacts with WDFY1 in response to LPS. Interacts with SMPDL3B. Interacts with CEACAM1; upon lipopolysaccharide stimulation, forms a complex including TLR4 and the phosphorylated form of SYK and CEACAM1, which in turn, recruits PTPN6 that dephosphorylates SYK, reducing the production of reactive oxygen species (ROS) and lysosome disruption, which in turn, reduces the activity of the inflammasome. Interacts with RFTN1; the interaction occurs in response to lipopolysaccharide stimulation. Interacts with SCIMP; the interaction occurs in response to lipopolysaccharide stimulation and is enhanced by phosphorylation of SCIMP by LYN. This interaction facilitates the phosphorylation of TLR4 by LYN which elicits a selective cytokine response in macrophages. Interacts with TRAF3IP3. Interacts with TREM1; this interaction enhances TLR4-mediated inflammatory response. Interacts with ZG16B/PAUF. Interacts with CD82; this interaction inhibits TLR4-mediated signaling pathway. In terms of processing, phosphorylated on tyrosine residues by LYN after binding lipopolysaccharide. Post-translationally, ubiquitinated by RNF128 via 'Lys-28'-linked polyubiquitin chains, leading to proteasomal degradation.

The protein localises to the cell membrane. It is found in the early endosome. It localises to the cell projection. Its subcellular location is the ruffle. Its function is as follows. Transmembrane receptor that functions as a pattern recognition receptor recognizing pathogen- and damage-associated molecular patterns (PAMPs and DAMPs) to induce innate immune responses via downstream signaling pathways. At the plasma membrane, cooperates with LY96 to mediate the innate immune response to bacterial lipopolysaccharide (LPS). Also involved in LPS-independent inflammatory responses triggered by free fatty acids, such as palmitate, and Ni(2+). Mechanistically, acts via MYD88, TIRAP and TRAF6, leading to NF-kappa-B activation, cytokine secretion and the inflammatory response. Alternatively, CD14-mediated TLR4 internalization via endocytosis is associated with the initiation of a MYD88-independent signaling via the TICAM1-TBK1-IRF3 axis leading to type I interferon production. In addition to the secretion of proinflammatory cytokines, initiates the activation of NLRP3 inflammasome and formation of a positive feedback loop between autophagy and NF-kappa-B signaling cascade. In complex with TLR6, promotes inflammation in monocytes/macrophages by associating with TLR6 and the receptor CD86. Upon ligand binding, such as oxLDL or amyloid-beta 42, the TLR4:TLR6 complex is internalized and triggers inflammatory response, leading to NF-kappa-B-dependent production of CXCL1, CXCL2 and CCL9 cytokines, via MYD88 signaling pathway, and CCL5 cytokine, via TICAM1 signaling pathway. In myeloid dendritic cells, vesicular stomatitis virus glycoprotein G but not LPS promotes the activation of IRF7, leading to type I IFN production in a CD14-dependent manner. The protein is Toll-like receptor 4 (TLR4) of Equus caballus (Horse).